The following is a 964-amino-acid chain: A-type ATP synthase subunit A (964 aa).

Residues 392-518 enclose the DOD-type homing endonuclease domain; it reads FLGYLMANGT…LSYLFAKLGI (127 aa).

Belongs to the ATPase alpha/beta chains family. As to quaternary structure, has multiple subunits with at least A(3), B(3), C, D, E, F, H, I and proteolipid K(x). Post-translationally, this protein undergoes a protein self splicing that involves a post-translational excision of the VDE intervening region (intein) followed by peptide ligation.

It localises to the cell membrane. The enzyme catalyses ATP + H2O + 4 H(+)(in) = ADP + phosphate + 5 H(+)(out). Component of the A-type ATP synthase that produces ATP from ADP in the presence of a proton gradient across the membrane. The A chain is the catalytic subunit. The sequence is that of A-type ATP synthase subunit A from Pyrococcus horikoshii (strain ATCC 700860 / DSM 12428 / JCM 9974 / NBRC 100139 / OT-3).